Reading from the N-terminus, the 127-residue chain is Small ribosomal subunit protein uS11 (127 aa).

The protein belongs to the universal ribosomal protein uS11 family. In terms of assembly, part of the 30S ribosomal subunit. Interacts with proteins S7 and S18. Binds to IF-3.

Located on the platform of the 30S subunit, it bridges several disparate RNA helices of the 16S rRNA. Forms part of the Shine-Dalgarno cleft in the 70S ribosome. The protein is Small ribosomal subunit protein uS11 of Ruthia magnifica subsp. Calyptogena magnifica.